Reading from the N-terminus, the 221-residue chain is ATP-dependent dethiobiotin synthetase BioD (221 aa).

Residue 11-16 participates in ATP binding; that stretch reads GVGKTY. Residue threonine 15 participates in Mg(2+) binding. Lysine 36 is an active-site residue. Position 40 (threonine 40) interacts with substrate. ATP-binding positions include aspartate 48 and 107-110; that span reads EGAG. Mg(2+)-binding residues include aspartate 48 and glutamate 107.

Belongs to the dethiobiotin synthetase family. As to quaternary structure, homodimer. It depends on Mg(2+) as a cofactor.

The protein localises to the cytoplasm. The catalysed reaction is (7R,8S)-7,8-diammoniononanoate + CO2 + ATP = (4R,5S)-dethiobiotin + ADP + phosphate + 3 H(+). The protein operates within cofactor biosynthesis; biotin biosynthesis; biotin from 7,8-diaminononanoate: step 1/2. Catalyzes a mechanistically unusual reaction, the ATP-dependent insertion of CO2 between the N7 and N8 nitrogen atoms of 7,8-diaminopelargonic acid (DAPA, also called 7,8-diammoniononanoate) to form a ureido ring. In Hydrogenobaculum sp. (strain Y04AAS1), this protein is ATP-dependent dethiobiotin synthetase BioD.